Consider the following 156-residue polypeptide: Small ribosomal subunit protein uS7 (156 aa).

The protein belongs to the universal ribosomal protein uS7 family. Part of the 30S ribosomal subunit. Contacts proteins S9 and S11.

Functionally, one of the primary rRNA binding proteins, it binds directly to 16S rRNA where it nucleates assembly of the head domain of the 30S subunit. Is located at the subunit interface close to the decoding center, probably blocks exit of the E-site tRNA. This is Small ribosomal subunit protein uS7 from Rhodospirillum rubrum (strain ATCC 11170 / ATH 1.1.1 / DSM 467 / LMG 4362 / NCIMB 8255 / S1).